Reading from the N-terminus, the 486-residue chain is Cardiolipin synthase A (486 aa).

2 helical membrane passes run 3–23 (TFYT…IAGV) and 38–58 (MAWL…YLSF). PLD phosphodiesterase domains follow at residues 219–246 (MDLR…VDPR) and 399–426 (EDGL…DMRS). Residues histidine 224, lysine 226, aspartate 231, histidine 404, lysine 406, and aspartate 411 contribute to the active site.

Belongs to the phospholipase D family. Cardiolipin synthase subfamily. ClsA sub-subfamily.

It localises to the cell inner membrane. It catalyses the reaction 2 a 1,2-diacyl-sn-glycero-3-phospho-(1'-sn-glycerol) = a cardiolipin + glycerol. Functionally, catalyzes the reversible phosphatidyl group transfer from one phosphatidylglycerol molecule to another to form cardiolipin (CL) (diphosphatidylglycerol) and glycerol. The chain is Cardiolipin synthase A from Serratia proteamaculans (strain 568).